The following is a 443-amino-acid chain: Xaa-Pro dipeptidase (443 aa).

5 residues coordinate Mn(2+): D246, D257, H339, E384, and E423.

It belongs to the peptidase M24B family. Bacterial-type prolidase subfamily. The cofactor is Mn(2+).

It carries out the reaction Xaa-L-Pro dipeptide + H2O = an L-alpha-amino acid + L-proline. In terms of biological role, splits dipeptides with a prolyl residue in the C-terminal position. In Cronobacter sakazakii (strain ATCC BAA-894) (Enterobacter sakazakii), this protein is Xaa-Pro dipeptidase.